The following is a 583-amino-acid chain: Aspartyl protease APCB1 (583 aa).

A helical transmembrane segment spans residues 83-103; that stretch reads LVLGLLGISLLAVAFYASVFP. Residues 203-564 enclose the Peptidase A1 domain; that stretch reads YYTRILVGKP…DNVKRRIGWM (362 aa). Catalysis depends on residues Asp-223 and Asp-431.

It belongs to the peptidase A1 family. As to quaternary structure, interacts with BAG6 and BAGP1.

Its subcellular location is the membrane. In terms of biological role, involved in proteolytic processing of BAG6 and plant basal immunity. The chain is Aspartyl protease APCB1 from Arabidopsis thaliana (Mouse-ear cress).